We begin with the raw amino-acid sequence, 61 residues long: Small ribosomal subunit protein uS14 (61 aa).

4 residues coordinate Zn(2+): Cys24, Cys27, Cys40, and Cys43.

This sequence belongs to the universal ribosomal protein uS14 family. Zinc-binding uS14 subfamily. In terms of assembly, part of the 30S ribosomal subunit. Contacts proteins S3 and S10. Zn(2+) serves as cofactor.

Its function is as follows. Binds 16S rRNA, required for the assembly of 30S particles and may also be responsible for determining the conformation of the 16S rRNA at the A site. The chain is Small ribosomal subunit protein uS14 from Halothermothrix orenii (strain H 168 / OCM 544 / DSM 9562).